An 86-amino-acid polypeptide reads, in one-letter code: Large ribosomal subunit protein uL23 (86 aa).

This sequence belongs to the universal ribosomal protein uL23 family. As to quaternary structure, part of the 50S ribosomal subunit. Contacts protein L29.

Binds to 23S rRNA. One of the proteins that surrounds the polypeptide exit tunnel on the outside of the ribosome. The chain is Large ribosomal subunit protein uL23 from Methanothermobacter thermautotrophicus (strain ATCC 29096 / DSM 1053 / JCM 10044 / NBRC 100330 / Delta H) (Methanobacterium thermoautotrophicum).